A 442-amino-acid polypeptide reads, in one-letter code: tRNA-2-methylthio-N(6)-dimethylallyladenosine synthase (442 aa).

An MTTase N-terminal domain is found at 5–122 (KKVFIKTLGC…LPEMIKQKQK (118 aa)). [4Fe-4S] cluster is bound by residues Cys-14, Cys-51, Cys-85, Cys-159, Cys-163, and Cys-166. Positions 145–378 (KAEGAKAYVS…DLLNSNAQII (234 aa)) constitute a Radical SAM core domain. The TRAM domain maps to 380-442 (RQMVGTNQRI…LPNSLRGELI (63 aa)).

It belongs to the methylthiotransferase family. MiaB subfamily. Monomer. Requires [4Fe-4S] cluster as cofactor.

Its subcellular location is the cytoplasm. It catalyses the reaction N(6)-dimethylallyladenosine(37) in tRNA + (sulfur carrier)-SH + AH2 + 2 S-adenosyl-L-methionine = 2-methylsulfanyl-N(6)-dimethylallyladenosine(37) in tRNA + (sulfur carrier)-H + 5'-deoxyadenosine + L-methionine + A + S-adenosyl-L-homocysteine + 2 H(+). In terms of biological role, catalyzes the methylthiolation of N6-(dimethylallyl)adenosine (i(6)A), leading to the formation of 2-methylthio-N6-(dimethylallyl)adenosine (ms(2)i(6)A) at position 37 in tRNAs that read codons beginning with uridine. The chain is tRNA-2-methylthio-N(6)-dimethylallyladenosine synthase from Francisella tularensis subsp. holarctica (strain LVS).